The sequence spans 556 residues: Energy-dependent translational throttle protein EttA (556 aa).

2 ABC transporter domains span residues 7 to 260 (YTMH…EQEQ) and 325 to 551 (IEVQ…RIKY). 40–47 (GLNGAGKS) is a binding site for ATP. Residues 96–140 (SEVKNALTRLDEVYALYADPDADFDKLAAEQANLEAIIQAHDGHN) form an arm region. The segment at 243 to 323 (GNYSSWLEQK…IPPGPRLGDK (81 aa)) is ptIM. An ATP-binding site is contributed by 357 to 364 (GANGAGKS).

The protein belongs to the ABC transporter superfamily. ABCF family. Translational throttle EttA subfamily. Monomer. Probably contacts ribosomal proteins L1, L5, L33 and S7, the 16S and 23S rRNA and the P-site containing tRNA(fMet).

It localises to the cytoplasm. It carries out the reaction ATP + H2O = ADP + phosphate + H(+). In terms of biological role, a translation factor that gates the progression of the 70S ribosomal initiation complex (IC, containing tRNA(fMet) in the P-site) into the translation elongation cycle by using a mechanism sensitive to the ATP/ADP ratio. Binds to the 70S ribosome E-site where it modulates the state of the translating ribosome during subunit translocation. ATP hydrolysis probably frees it from the ribosome, which can enter the elongation phase. This chain is Energy-dependent translational throttle protein EttA, found in Haemophilus influenzae (strain ATCC 51907 / DSM 11121 / KW20 / Rd).